Reading from the N-terminus, the 196-residue chain is MAQILTPDALATLFTDARTHNGWLDKPVEDALLKQAYHLARMGPTSANCCPARFVFICSSEAKERLKPALSSGNLAKTLQAPVTAIVAYDPVFYDALPKLFPQSDARSWFTSSPELATETAFRNSSLQAAYLIIACRALGLDTGPMSGFNNAQVDEIFLAEKGWKSNLLVNIGYGDINKLYERAPRLAFDEACQVL.

This sequence belongs to the nitroreductase family. HadB/RutE subfamily. It depends on FMN as a cofactor.

It catalyses the reaction 3-hydroxypropanoate + NADP(+) = 3-oxopropanoate + NADPH + H(+). May reduce toxic product malonic semialdehyde to 3-hydroxypropionic acid, which is excreted. This chain is Probable malonic semialdehyde reductase RutE, found in Yersinia enterocolitica serotype O:8 / biotype 1B (strain NCTC 13174 / 8081).